We begin with the raw amino-acid sequence, 362 residues long: Probable dual-specificity RNA methyltransferase RlmN (362 aa).

Glutamate 105 serves as the catalytic Proton acceptor. Positions 111–344 constitute a Radical SAM core domain; that stretch reads HEYGNSICVT…VTIRREQGHD (234 aa). The cysteines at positions 118 and 349 are disulfide-linked. [4Fe-4S] cluster contacts are provided by cysteine 125, cysteine 129, and cysteine 132. S-adenosyl-L-methionine is bound by residues 175–176, serine 207, 230–232, and asparagine 306; these read GE and SLH. Cysteine 349 (S-methylcysteine intermediate) is an active-site residue.

Belongs to the radical SAM superfamily. RlmN family. [4Fe-4S] cluster serves as cofactor.

The protein localises to the cytoplasm. It catalyses the reaction adenosine(2503) in 23S rRNA + 2 reduced [2Fe-2S]-[ferredoxin] + 2 S-adenosyl-L-methionine = 2-methyladenosine(2503) in 23S rRNA + 5'-deoxyadenosine + L-methionine + 2 oxidized [2Fe-2S]-[ferredoxin] + S-adenosyl-L-homocysteine. It carries out the reaction adenosine(37) in tRNA + 2 reduced [2Fe-2S]-[ferredoxin] + 2 S-adenosyl-L-methionine = 2-methyladenosine(37) in tRNA + 5'-deoxyadenosine + L-methionine + 2 oxidized [2Fe-2S]-[ferredoxin] + S-adenosyl-L-homocysteine. Functionally, specifically methylates position 2 of adenine 2503 in 23S rRNA and position 2 of adenine 37 in tRNAs. The chain is Probable dual-specificity RNA methyltransferase RlmN from Bacillus cereus (strain G9842).